A 404-amino-acid polypeptide reads, in one-letter code: Indole-3-acetate O-methyltransferase 1 (404 aa).

Residues 82–83 (GC), Asn-88, Asp-120, 169–171 (TFY), and 186–188 (TFS) contribute to the S-adenosyl-L-methionine site. Residues Asn-208, Val-212, Arg-294, Asp-295, Phe-297, and Asn-298 each coordinate Mg(2+).

This sequence belongs to the methyltransferase superfamily. SABATH family. In terms of assembly, homodimer. The cofactor is Mg(2+). As to expression, expressed in roots and panicles.

It carries out the reaction (indol-3-yl)acetate + S-adenosyl-L-methionine = methyl (indol-3-yl)acetate + S-adenosyl-L-homocysteine. Catalyzes the methylation of the free carboxyl end of the plant hormone indole-3-acetic acid (IAA). Converts IAA to IAA methyl ester (MeIAA). Regulates IAA activities by IAA methylation. Methylation of IAA plays an important role in regulating plant development and auxin homeostasis. MeIAA seems to be an inactive form of IAA. This is Indole-3-acetate O-methyltransferase 1 (IAMT1) from Oryza sativa subsp. japonica (Rice).